The primary structure comprises 90 residues: Probable Fe(2+)-trafficking protein (90 aa).

Belongs to the Fe(2+)-trafficking protein family. In terms of assembly, monomer.

Could be a mediator in iron transactions between iron acquisition and iron-requiring processes, such as synthesis and/or repair of Fe-S clusters in biosynthetic enzymes. This chain is Probable Fe(2+)-trafficking protein, found in Yersinia pestis bv. Antiqua (strain Antiqua).